A 186-amino-acid polypeptide reads, in one-letter code: UPF0200 protein Hbut_0338 (186 aa).

Residue 13-20 (GMPGSGKS) participates in ATP binding.

This sequence belongs to the UPF0200 family.

This Hyperthermus butylicus (strain DSM 5456 / JCM 9403 / PLM1-5) protein is UPF0200 protein Hbut_0338.